The sequence spans 315 residues: 4-diphosphocytidyl-2-C-methyl-D-erythritol kinase (315 aa).

The active site involves Lys-26. Residue 111-121 (PLAGGLAGGSA) participates in ATP binding. Asp-153 is a catalytic residue.

The protein belongs to the GHMP kinase family. IspE subfamily.

The catalysed reaction is 4-CDP-2-C-methyl-D-erythritol + ATP = 4-CDP-2-C-methyl-D-erythritol 2-phosphate + ADP + H(+). It participates in isoprenoid biosynthesis; isopentenyl diphosphate biosynthesis via DXP pathway; isopentenyl diphosphate from 1-deoxy-D-xylulose 5-phosphate: step 3/6. Its function is as follows. Catalyzes the phosphorylation of the position 2 hydroxy group of 4-diphosphocytidyl-2C-methyl-D-erythritol. The protein is 4-diphosphocytidyl-2-C-methyl-D-erythritol kinase of Salinispora tropica (strain ATCC BAA-916 / DSM 44818 / JCM 13857 / NBRC 105044 / CNB-440).